Consider the following 60-residue polypeptide: Large ribosomal subunit protein bL32 (60 aa).

Belongs to the bacterial ribosomal protein bL32 family.

The polypeptide is Large ribosomal subunit protein bL32 (Borrelia turicatae (strain 91E135)).